Reading from the N-terminus, the 575-residue chain is Alpha-(1,6)-fucosyltransferase (575 aa).

Over 1 to 9 (MRPWTGSWR) the chain is Cytoplasmic. The chain crosses the membrane as a helical; Signal-anchor for type II membrane protein span at residues 10–30 (WIMLILFAWGTLLFYIGGHLV). At 31-575 (RDNDHSDHSS…KYPTYPEADK (545 aa)) the chain is on the lumenal side. Intrachain disulfides connect C204/C266, C212/C230, and C218/C222. The GT23 domain occupies 206–493 (KAKKLVCNIN…PDASANFRSL (288 aa)). S278 carries the post-translational modification Phosphoserine. The SH3-binding motif lies at 299–305 (PRPPYLP). Residues 365 to 366 (RR) are important for donor substrate binding. C465 and C472 are joined by a disulfide. The region spanning 502–563 (PNAHNQIAIY…PSYKVREKIE (62 aa)) is the SH3 domain.

It belongs to the glycosyltransferase 23 family. Post-translationally, tyrosine phosphorylated by PKDCC/VLK. In terms of tissue distribution, highest expression in brain.

It localises to the golgi apparatus. The protein localises to the golgi stack membrane. It carries out the reaction N(4)-{beta-D-GlcNAc-(1-&gt;2)-alpha-D-Man-(1-&gt;3)-[beta-D-GlcNAc-(1-&gt;2)-alpha-D-Man-(1-&gt;6)]-beta-D-Man-(1-&gt;4)-beta-D-GlcNAc-(1-&gt;4)-beta-D-GlcNAc}-L-asparaginyl-[protein] + GDP-beta-L-fucose = an N(4)-{beta-D-GlcNAc-(1-&gt;2)-alpha-D-Man-(1-&gt;3)-[beta-D-GlcNAc-(1-&gt;2)-alpha-D-Man-(1-&gt;6)]-beta-D-Man-(1-&gt;4)-beta-D-GlcNAc-(1-&gt;4)-[alpha-L-Fuc-(1-&gt;6)]-beta-D-GlcNAc}-L-asparaginyl-[protein] + GDP + H(+). It functions in the pathway protein modification; protein glycosylation. In terms of biological role, catalyzes the addition of fucose in alpha 1-6 linkage to the first GlcNAc residue, next to the peptide chains in N-glycans. The sequence is that of Alpha-(1,6)-fucosyltransferase (FUT8) from Sus scrofa (Pig).